A 209-amino-acid polypeptide reads, in one-letter code: Small ribosomal subunit protein uS3 (209 aa).

Residues 38–107 (IRKVIKSKYA…RFIVNVEEIK (70 aa)) enclose the KH type-2 domain.

The protein belongs to the universal ribosomal protein uS3 family. In terms of assembly, part of the 30S ribosomal subunit. Forms a tight complex with proteins S10 and S14.

Its function is as follows. Binds the lower part of the 30S subunit head. Binds mRNA in the 70S ribosome, positioning it for translation. In Thermosipho melanesiensis (strain DSM 12029 / CIP 104789 / BI429), this protein is Small ribosomal subunit protein uS3.